The sequence spans 176 residues: NAD(P)H-quinone oxidoreductase subunit 6, chloroplastic (176 aa).

Transmembrane regions (helical) follow at residues 10 to 30 (FLLV…VLLP), 32 to 52 (PIYS…FYIL), 61 to 81 (AQLL…VMFI), 92 to 112 (LWTV…VSLI), and 152 to 172 (FFLP…GAIA).

It belongs to the complex I subunit 6 family. As to quaternary structure, NDH is composed of at least 16 different subunits, 5 of which are encoded in the nucleus.

Its subcellular location is the plastid. It is found in the chloroplast thylakoid membrane. It carries out the reaction a plastoquinone + NADH + (n+1) H(+)(in) = a plastoquinol + NAD(+) + n H(+)(out). The catalysed reaction is a plastoquinone + NADPH + (n+1) H(+)(in) = a plastoquinol + NADP(+) + n H(+)(out). In terms of biological role, NDH shuttles electrons from NAD(P)H:plastoquinone, via FMN and iron-sulfur (Fe-S) centers, to quinones in the photosynthetic chain and possibly in a chloroplast respiratory chain. The immediate electron acceptor for the enzyme in this species is believed to be plastoquinone. Couples the redox reaction to proton translocation, and thus conserves the redox energy in a proton gradient. This chain is NAD(P)H-quinone oxidoreductase subunit 6, chloroplastic (ndhG), found in Lactuca sativa (Garden lettuce).